Reading from the N-terminus, the 159-residue chain is SsrA-binding protein (159 aa).

This sequence belongs to the SmpB family.

It localises to the cytoplasm. Required for rescue of stalled ribosomes mediated by trans-translation. Binds to transfer-messenger RNA (tmRNA), required for stable association of tmRNA with ribosomes. tmRNA and SmpB together mimic tRNA shape, replacing the anticodon stem-loop with SmpB. tmRNA is encoded by the ssrA gene; the 2 termini fold to resemble tRNA(Ala) and it encodes a 'tag peptide', a short internal open reading frame. During trans-translation Ala-aminoacylated tmRNA acts like a tRNA, entering the A-site of stalled ribosomes, displacing the stalled mRNA. The ribosome then switches to translate the ORF on the tmRNA; the nascent peptide is terminated with the 'tag peptide' encoded by the tmRNA and targeted for degradation. The ribosome is freed to recommence translation, which seems to be the essential function of trans-translation. The chain is SsrA-binding protein from Coxiella burnetii (strain RSA 331 / Henzerling II).